Reading from the N-terminus, the 298-residue chain is Cytidine deaminase (298 aa).

CMP/dCMP-type deaminase domains follow at residues 47 to 167 and 186 to 298; these read TEQQ…FGPS and DSDD…PLLG. 88-90 contributes to the substrate binding site; sequence NLE. His101 lines the Zn(2+) pocket. Glu103 serves as the catalytic Proton donor. Residues Cys128 and Cys131 each coordinate Zn(2+).

The protein belongs to the cytidine and deoxycytidylate deaminase family. In terms of assembly, homodimer. Zn(2+) serves as cofactor.

The catalysed reaction is cytidine + H2O + H(+) = uridine + NH4(+). The enzyme catalyses 2'-deoxycytidine + H2O + H(+) = 2'-deoxyuridine + NH4(+). This enzyme scavenges exogenous and endogenous cytidine and 2'-deoxycytidine for UMP synthesis. The chain is Cytidine deaminase from Shewanella frigidimarina (strain NCIMB 400).